We begin with the raw amino-acid sequence, 105 residues long: Large ribosomal subunit protein uL24 (105 aa).

The protein belongs to the universal ribosomal protein uL24 family. As to quaternary structure, part of the 50S ribosomal subunit.

One of two assembly initiator proteins, it binds directly to the 5'-end of the 23S rRNA, where it nucleates assembly of the 50S subunit. Functionally, one of the proteins that surrounds the polypeptide exit tunnel on the outside of the subunit. This Mycobacterium leprae (strain Br4923) protein is Large ribosomal subunit protein uL24.